The chain runs to 412 residues: MENVKKTDPTIFSWIEEEWKRQEEGIELIASENFASRAVMEAQGSVLTNKYAEGYPGRRYYGGCQFVDKVEELAISRVKELFNADHANVQPHSGASANMGVYLAALKPGDTVLGMSLDHGGHLTHGSPVNISGKYFNFHHYGILEDTGKIDFDKVRELAKEHKPKMIVAGASAYPRIIDFATFREIADEVGAYLMVDMAHIAGLVAAGLHPNPVPYADFVTTTTHKTLRGPRGGVVLCKEEYKKEIDKAMFPGLQGGPLMHVIASKAVSFQEALSSEFKNYQKQVIKNASVLADELNNLGYDLVAGGSDNHLMLVDLQKKGVTGKKAERVLDDVHITVNKNAVPNDPEGPFVTSGLRLGTPAVTTRGFAEDEIKEVAQLLDKVITGLEDQENLEKCKKQVTDLCHRFPLYRQ.

(6S)-5,6,7,8-tetrahydrofolate-binding positions include leucine 117 and 121 to 123 (GHL). Lysine 226 carries the N6-(pyridoxal phosphate)lysine modification.

Belongs to the SHMT family. Homodimer. Requires pyridoxal 5'-phosphate as cofactor.

It is found in the cytoplasm. The catalysed reaction is (6R)-5,10-methylene-5,6,7,8-tetrahydrofolate + glycine + H2O = (6S)-5,6,7,8-tetrahydrofolate + L-serine. Its pathway is one-carbon metabolism; tetrahydrofolate interconversion. It functions in the pathway amino-acid biosynthesis; glycine biosynthesis; glycine from L-serine: step 1/1. Functionally, catalyzes the reversible interconversion of serine and glycine with tetrahydrofolate (THF) serving as the one-carbon carrier. This reaction serves as the major source of one-carbon groups required for the biosynthesis of purines, thymidylate, methionine, and other important biomolecules. Also exhibits THF-independent aldolase activity toward beta-hydroxyamino acids, producing glycine and aldehydes, via a retro-aldol mechanism. The chain is Serine hydroxymethyltransferase from Natranaerobius thermophilus (strain ATCC BAA-1301 / DSM 18059 / JW/NM-WN-LF).